The sequence spans 132 residues: D-ribose pyranase (132 aa).

Residue His-20 is the Proton donor of the active site. Residues Asp-28, His-99, and 121-123 (YSN) each bind substrate.

The protein belongs to the RbsD / FucU family. RbsD subfamily. In terms of assembly, homodecamer.

The protein resides in the cytoplasm. The catalysed reaction is beta-D-ribopyranose = beta-D-ribofuranose. The protein operates within carbohydrate metabolism; D-ribose degradation; D-ribose 5-phosphate from beta-D-ribopyranose: step 1/2. In terms of biological role, catalyzes the interconversion of beta-pyran and beta-furan forms of D-ribose. This is D-ribose pyranase from Pseudomonas putida (strain GB-1).